A 443-amino-acid chain; its full sequence is Ribosomal protein uS12 methylthiotransferase RimO (443 aa).

An MTTase N-terminal domain is found at 8-118 (PKIGFVSLGC…VLSHIHHYVP (111 aa)). Residues Cys17, Cys53, Cys82, Cys150, Cys154, and Cys157 each coordinate [4Fe-4S] cluster. One can recognise a Radical SAM core domain in the interval 136–373 (LTPRHYAYLK…MQLQQQISTE (238 aa)). A TRAM domain is found at 376–442 (QEKIGKVLPV…EYDLWGTIVE (67 aa)).

It belongs to the methylthiotransferase family. RimO subfamily. It depends on [4Fe-4S] cluster as a cofactor.

It localises to the cytoplasm. The enzyme catalyses L-aspartate(89)-[ribosomal protein uS12]-hydrogen + (sulfur carrier)-SH + AH2 + 2 S-adenosyl-L-methionine = 3-methylsulfanyl-L-aspartate(89)-[ribosomal protein uS12]-hydrogen + (sulfur carrier)-H + 5'-deoxyadenosine + L-methionine + A + S-adenosyl-L-homocysteine + 2 H(+). Functionally, catalyzes the methylthiolation of an aspartic acid residue of ribosomal protein uS12. The protein is Ribosomal protein uS12 methylthiotransferase RimO of Proteus mirabilis (strain HI4320).